We begin with the raw amino-acid sequence, 126 residues long: Large ribosomal subunit protein bL12 (126 aa).

It belongs to the bacterial ribosomal protein bL12 family. As to quaternary structure, homodimer. Part of the ribosomal stalk of the 50S ribosomal subunit. Forms a multimeric L10(L12)X complex, where L10 forms an elongated spine to which 2 to 4 L12 dimers bind in a sequential fashion. Binds GTP-bound translation factors.

Functionally, forms part of the ribosomal stalk which helps the ribosome interact with GTP-bound translation factors. Is thus essential for accurate translation. In Geotalea daltonii (strain DSM 22248 / JCM 15807 / FRC-32) (Geobacter daltonii), this protein is Large ribosomal subunit protein bL12.